Consider the following 447-residue polypeptide: Succinate--CoA ligase [ADP-forming] subunit beta, mitochondrial (447 aa).

Residues 1–34 (MFKLGRNRALASAFAATSRAPLASRLPSVSQQQR) constitute a mitochondrion transit peptide. The ATP-grasp domain occupies 45-287 (ADLLRQYGIG…TTQEDPDEVR (243 aa)). Residues Lys82, 89-91 (GRG), and Glu150 contribute to the ATP site. Residues Asn242 and Asp256 each contribute to the Mg(2+) site. Residues Asn307 and 364–366 (GIV) contribute to the substrate site.

This sequence belongs to the succinate/malate CoA ligase beta subunit family. As to quaternary structure, heterodimer of an alpha and a beta subunit. It depends on Mg(2+) as a cofactor.

The protein resides in the mitochondrion. It carries out the reaction succinate + ATP + CoA = succinyl-CoA + ADP + phosphate. It participates in carbohydrate metabolism; tricarboxylic acid cycle; succinate from succinyl-CoA (ligase route): step 1/1. Its function is as follows. Succinyl-CoA synthetase functions in the citric acid cycle (TCA), coupling the hydrolysis of succinyl-CoA to the synthesis of ATP and thus represents the only step of substrate-level phosphorylation in the TCA. The beta subunit provides nucleotide specificity of the enzyme and binds the substrate succinate, while the binding sites for coenzyme A and phosphate are found in the alpha subunit. This is Succinate--CoA ligase [ADP-forming] subunit beta, mitochondrial from Neurospora crassa (strain ATCC 24698 / 74-OR23-1A / CBS 708.71 / DSM 1257 / FGSC 987).